A 1700-amino-acid polypeptide reads, in one-letter code: Leucine-rich repeat-containing protein 37A2 (1700 aa).

The N-terminal stretch at 1–35 is a signal peptide; the sequence is MSSAQCPALVCVMSRLRFWGPWPLLMWQLLWLLVK. Residues 36-1582 are Extracellular-facing; the sequence is EAQPLEWVKD…VPGYGYTDKL (1547 aa). Polar residues predominate over residues 54–65; sequence LGPPDSWSSHSS. Disordered regions lie at residues 54–104, 130–156, 169–534, 559–580, 619–642, and 729–752; these read LGPP…ESTE, QQDL…DPAQ, QLST…AQPP, TEVE…KVVP, PEPT…KHPE, and TKPT…PDLG. One copy of the LRR 1 repeat lies at 137–160; the sequence is LSPQERLPVSPKKLKKDPAQRWSL. Polar residues-rich tracts occupy residues 169 to 189 and 223 to 237; these read QLST…STDT and ETQN…QSSS. 2 LRR repeats span residues 230 to 253 and 267 to 290; these read LEDI…LEEE and ESSM…EDQA. Low complexity predominate over residues 238–249; sequence LQQEAPAQLPQL. A glycan (N-linked (GlcNAc...) asparagine) is linked at N296. The segment covering 307 to 326 has biased composition (polar residues); the sequence is TITSEPTNETESSQAQQETP. A compositionally biased stretch (low complexity) spans 358–368; the sequence is SEQQQPVQPSE. The span at 433–446 shows a compositional bias: polar residues; the sequence is LVHQEATTRLSGSG. The segment covering 482 to 493 has biased composition (low complexity); sequence SPEPINNENPSP. The segment covering 729–749 has biased composition (low complexity); it reads TKPTTEVKPSPTTEETSTQPP. LRR repeat units follow at residues 864 to 887, 888 to 911, 912 to 935, 937 to 959, 963 to 987, and 1002 to 1027; these read NGTF…VWKA, YSWT…SFEG, LLSL…TFEP, PFLK…TFQA, MQFL…LFKL, and LTTL…MACC. An N-linked (GlcNAc...) asparagine glycan is attached at N1079. One copy of the LRR 10 repeat lies at 1124-1146; the sequence is LPYFSAVNLDVKSLLLPFIKLPT. 2 stretches are compositionally biased toward basic and acidic residues: residues 1182–1191 and 1201–1216; these read VGRQSIRREQ and AEEK…EVEQ. Disordered regions lie at residues 1182-1227 and 1309-1328; these read VGRQ…EKLA and KTRS…PKVR. Residues 1583–1603 form a helical membrane-spanning segment; it reads ILALIVTGILTILIILFCLIV. Residues 1604–1700 are Cytoplasmic-facing; that stretch reads ICCHRRSLQE…TEEEESEALP (97 aa). The segment covering 1675–1685 has biased composition (basic and acidic residues); sequence NEDKILNRDPG. The tract at residues 1675–1700 is disordered; sequence NEDKILNRDPGDSEAPTEEEESEALP. Positions 1689–1700 are enriched in acidic residues; sequence APTEEEESEALP.

Belongs to the LRRC37A family.

The protein resides in the membrane. This chain is Leucine-rich repeat-containing protein 37A2 (LRRC37A2), found in Homo sapiens (Human).